We begin with the raw amino-acid sequence, 280 residues long: Shikimate dehydrogenase (NADP(+)) (280 aa).

Shikimate is bound by residues 15-17 (SLS) and Thr-62. The active-site Proton acceptor is the Lys-66. Shikimate is bound by residues Asn-88 and Asp-104. Residues 128-132 (GAGGA), 151-156 (NRTEGR), and Ile-222 contribute to the NADP(+) site. Shikimate is bound at residue Tyr-224. Gly-245 is an NADP(+) binding site.

Belongs to the shikimate dehydrogenase family. In terms of assembly, homodimer.

The enzyme catalyses shikimate + NADP(+) = 3-dehydroshikimate + NADPH + H(+). The protein operates within metabolic intermediate biosynthesis; chorismate biosynthesis; chorismate from D-erythrose 4-phosphate and phosphoenolpyruvate: step 4/7. In terms of biological role, involved in the biosynthesis of the chorismate, which leads to the biosynthesis of aromatic amino acids. Catalyzes the reversible NADPH linked reduction of 3-dehydroshikimate (DHSA) to yield shikimate (SA). This is Shikimate dehydrogenase (NADP(+)) from Methanosarcina barkeri (strain Fusaro / DSM 804).